The primary structure comprises 168 residues: Small ribosomal subunit protein uS5 (168 aa).

An S5 DRBM domain is found at 11 to 74; the sequence is YSEKVVKIDR…ESAKKHLVKI (64 aa).

It belongs to the universal ribosomal protein uS5 family. Part of the 30S ribosomal subunit. Contacts proteins S4 and S8.

Functionally, with S4 and S12 plays an important role in translational accuracy. Located at the back of the 30S subunit body where it stabilizes the conformation of the head with respect to the body. The chain is Small ribosomal subunit protein uS5 from Leptospira interrogans serogroup Icterohaemorrhagiae serovar copenhageni (strain Fiocruz L1-130).